We begin with the raw amino-acid sequence, 358 residues long: Trans-enoyl reductase milB (358 aa).

Residues 48–51 (VDTK), 170–173 (ATAT), 193–196 (SAKH), Y211, 258–259 (LD), and 349–350 (VR) each bind NADP(+).

The protein belongs to the zinc-containing alcohol dehydrogenase family. In terms of assembly, monomer.

The catalysed reaction is 10 malonyl-CoA + acetyl-CoA + 3 AH2 + 8 NADPH + 18 H(+) = cordypyrone A + 3 A + 10 CO2 + 8 NADP(+) + 11 CoA + 8 H2O. The protein operates within secondary metabolite biosynthesis. Its function is as follows. Trans-enoyl reductase; part of the gene cluster that mediates the biosynthesis of cordypyrones A and B, 2 pyrones that show modest activities against pathogenic bacteria including methicillin-resistant Staphylococcus aureus (MRSA), Mycobacterium tuberculosis and Bacillus cereus. The HR-PKS milA catalyzes the formation of cordypyrones A via condensation of one acetate with 10 malonate units. Since milA lacks an enoyl reductase domain, the 2 beta-keto processing domains DH and KR of milA collaborate with the trans-enoyl reductase milB to catalyze the different levels of reduction. The cytochrome P450 monooxygenase milC then hydroxylates the C-22 of cordypyrones A to yield cordypyrones B. This Cordyceps militaris (strain CM01) (Caterpillar fungus) protein is Trans-enoyl reductase milB.